The following is a 268-amino-acid chain: Probable membrane transporter protein HI_0806 (268 aa).

Transmembrane regions (helical) follow at residues 6–26, 46–66, 79–99, 101–121, 147–167, 178–198, 212–232, and 248–268; these read IFIL…FGIG, VISA…LLFF, ILWS…SFYF, TAII…KTFL, GGGL…APLV, IAVY…YGYL, LGLN…MSFF, and LLAI…FVFH.

It belongs to the 4-toluene sulfonate uptake permease (TSUP) (TC 2.A.102) family.

The protein resides in the cell membrane. This chain is Probable membrane transporter protein HI_0806, found in Haemophilus influenzae (strain ATCC 51907 / DSM 11121 / KW20 / Rd).